A 229-amino-acid polypeptide reads, in one-letter code: Potassium/proton antiporter CemA (229 aa).

3 consecutive transmembrane segments (helical) span residues 7 to 27, 106 to 126, and 189 to 209; these read LTPF…SLSF, IVLH…YYFL, and IISG…KYWI.

Belongs to the CemA family.

The protein localises to the plastid. Its subcellular location is the chloroplast inner membrane. It catalyses the reaction K(+)(in) + H(+)(out) = K(+)(out) + H(+)(in). Contributes to K(+)/H(+) antiport activity by supporting proton efflux to control proton extrusion and homeostasis in chloroplasts in a light-dependent manner to modulate photosynthesis. Prevents excessive induction of non-photochemical quenching (NPQ) under continuous-light conditions. Indirectly promotes efficient inorganic carbon uptake into chloroplasts. The sequence is that of Potassium/proton antiporter CemA from Calycanthus floridus var. glaucus (Eastern sweetshrub).